A 573-amino-acid chain; its full sequence is uncharacterized protein (573 aa).

2 disordered regions span residues 1 to 33 (MLQQ…SIPR) and 60 to 101 (LVAN…SRYD). The span at 60-70 (LVANRSDNNGN) shows a compositional bias: polar residues. An N-linked (GlcNAc...) asparagine glycan is attached at N63. Low complexity predominate over residues 84–95 (SSSTSSLPSTRN). 10 repeat units span residues 102 to 103 (NM), 104 to 105 (NM), 106 to 107 (NM), 108 to 109 (NM), 110 to 111 (NM), 112 to 113 (NM), 114 to 115 (NM), 116 to 117 (NM), 118 to 119 (NM), and 120 to 121 (NM). A 10 X 2 AA tandem repeats of N-M region spans residues 102 to 121 (NMNMNMNMNMNMNMNMNMNM). Residue N123 is glycosylated (N-linked (GlcNAc...) asparagine). Disordered regions lie at residues 150–174 (IPEK…PRVR), 192–271 (QFPN…IRSN), 286–317 (KSSN…PITS), and 357–379 (NNRI…DKRT). A compositionally biased stretch (polar residues) spans 157-170 (SRYSLRSSPPTYSN). Low complexity predominate over residues 208 to 225 (LPPSSTFPDSPSSSSLPL). A compositionally biased stretch (polar residues) spans 226–252 (TQTGGPSSADNDSIATGTNNRSPQQTK). N236 is a glycosylation site (N-linked (GlcNAc...) asparagine). Residues N437 and N442 are each glycosylated (N-linked (GlcNAc...) asparagine). Low complexity-rich tracts occupy residues 441-457 (INSS…SSSS) and 466-483 (SISS…SKSK). The interval 441-483 (INSSISSPAPSSSSSSSLVSRGPMQSISSSPTPAPSSGSSKSK) is disordered. N498, N535, and N541 each carry an N-linked (GlcNAc...) asparagine glycan.

It to yeast AFR1. N-glycosylated.

This is an uncharacterized protein from Saccharomyces cerevisiae (strain ATCC 204508 / S288c) (Baker's yeast).